A 140-amino-acid chain; its full sequence is Cysteine protease inhibitor 6 (140 aa).

A disulfide bridge links Cys-103 with Cys-109.

It belongs to the protease inhibitor I3 (leguminous Kunitz-type inhibitor) family.

It localises to the vacuole. In terms of biological role, inhibitor of cysteine proteases. May protect the plant by inhibiting proteases of invading organisms. In Solanum tuberosum (Potato), this protein is Cysteine protease inhibitor 6.